Here is a 452-residue protein sequence, read N- to C-terminus: Na(+)/H(+) antiporter NhaA (452 aa).

Helical transmembrane passes span methionine 23–isoleucine 43, leucine 71–isoleucine 91, leucine 108–valine 128, glycine 136–glycine 156, valine 165–phenylalanine 185, histidine 189–glycine 209, leucine 216–histidine 236, isoleucine 316–glycine 336, valine 349–valine 369, leucine 385–leucine 405, and glutamate 418–leucine 438.

Belongs to the NhaA Na(+)/H(+) (TC 2.A.33) antiporter family.

It localises to the cell inner membrane. The catalysed reaction is Na(+)(in) + 2 H(+)(out) = Na(+)(out) + 2 H(+)(in). In terms of biological role, na(+)/H(+) antiporter that extrudes sodium in exchange for external protons. The polypeptide is Na(+)/H(+) antiporter NhaA (Porphyromonas gingivalis (strain ATCC 33277 / DSM 20709 / CIP 103683 / JCM 12257 / NCTC 11834 / 2561)).